The chain runs to 105 residues: Small ribosomal subunit protein uS10 (105 aa).

It belongs to the universal ribosomal protein uS10 family. In terms of assembly, part of the 30S ribosomal subunit.

In terms of biological role, involved in the binding of tRNA to the ribosomes. The chain is Small ribosomal subunit protein uS10 from Nostoc punctiforme (strain ATCC 29133 / PCC 73102).